Here is a 666-residue protein sequence, read N- to C-terminus: DNA-directed RNA polymerase III subunit rpc3 (666 aa).

Disordered regions lie at residues 130-153 (HEPHANGNSNETNGATNGNGVHSY) and 375-455 (SRLD…TESR). Polar residues predominate over residues 135–153 (NGNSNETNGATNGNGVHSY). Residues 593–614 (TYKAMSRCLQRLDVEKRRKANI) are leucine-zipper.

The protein belongs to the RNA polymerase beta chain family. In terms of assembly, component of the RNA polymerase III (Pol III) complex consisting of 17 subunits.

The protein resides in the nucleus. In terms of biological role, DNA-dependent RNA polymerase catalyzes the transcription of DNA into RNA using the four ribonucleoside triphosphates as substrates. Specific core component of RNA polymerase III which synthesizes small RNAs, such as 5S rRNA and tRNAs. This Botryotinia fuckeliana (strain B05.10) (Noble rot fungus) protein is DNA-directed RNA polymerase III subunit rpc3 (rpc82).